A 349-amino-acid chain; its full sequence is Phloroglucinol synthase (349 aa).

Cys-138 is a catalytic residue.

This sequence belongs to the thiolase-like superfamily. Chalcone/stilbene synthases family.

It catalyses the reaction 3 malonyl-CoA + 3 H(+) = 1,3,5-trihydroxybenzene + 3 CO2 + 3 CoA. It participates in antibiotic biosynthesis. Its function is as follows. Type III polyketide synthase that catalyzes the synthesis of phloroglucinol from three molecules of malonyl-CoA. In addition to its ability to produce phloroglucinol from malonyl-CoA, it exhibits broad substrate specificity, accepting C4-C12 aliphatic acyl-CoAs and phenylacetyl-CoA as the starters to form C6-polyoxoalkylated alpha-pyrones from sequential condensation with malonyl-CoA. The chain is Phloroglucinol synthase from Pseudomonas fluorescens (strain ATCC BAA-477 / NRRL B-23932 / Pf-5).